Consider the following 285-residue polypeptide: MGQLGVGRTGKTAVLDIELRRSGSRTIISRQYSEVPLQVQRALYPDAGLPGMAHVYVLSPSGGLLQGDRYKTSISLKDKAAAHVTTQGASRIYGMNSNCAIHKMDISAGKGCYLEYIPDQVIPYAKSRYFQEVRLAIDDDAAAVYSEVVTPGRVAMGESFLYDILCTSVRCENQDGSLRFAENARAEPRRMNLRGEAVLGGYSVHGTVYVMAPPESARTIEYTAGRIISHTDGILGGTSLLPGGAGITARLLSHRTDSIFKCIEGIAGACRMEMTGAAYPGIRKC.

It belongs to the UreD family. In terms of assembly, ureD, UreF and UreG form a complex that acts as a GTP-hydrolysis-dependent molecular chaperone, activating the urease apoprotein by helping to assemble the nickel containing metallocenter of UreC. The UreE protein probably delivers the nickel.

Its subcellular location is the cytoplasm. Functionally, required for maturation of urease via the functional incorporation of the urease nickel metallocenter. The protein is Urease accessory protein UreD of Cenarchaeum symbiosum (strain A).